The sequence spans 94 residues: MSRSLKKGPFCDEHLMKKVEELNKNDEKKIIKTWSRRSTIFPNFVGHTIAVHDGRKHVPVYITDDMVGHKLGEFVPTRTYKGHIKNEKTSKVRN.

Belongs to the universal ribosomal protein uS19 family.

Protein S19 forms a complex with S13 that binds strongly to the 16S ribosomal RNA. The polypeptide is Small ribosomal subunit protein uS19 (Finegoldia magna (strain ATCC 29328 / DSM 20472 / WAL 2508) (Peptostreptococcus magnus)).